The sequence spans 129 residues: L-ectoine synthase (129 aa).

The protein belongs to the ectoine synthase family.

It carries out the reaction (2S)-4-acetamido-2-aminobutanoate = L-ectoine + H2O. It participates in amine and polyamine biosynthesis; ectoine biosynthesis; L-ectoine from L-aspartate 4-semialdehyde: step 3/3. Functionally, catalyzes the circularization of gamma-N-acetyl-alpha,gamma-diaminobutyric acid (ADABA) to ectoine (1,4,5,6-tetrahydro-2-methyl-4-pyrimidine carboxylic acid), which is an excellent osmoprotectant. The chain is L-ectoine synthase from Desulfosudis oleivorans (strain DSM 6200 / JCM 39069 / Hxd3) (Desulfococcus oleovorans).